A 432-amino-acid chain; its full sequence is EF-hand calcium-binding domain-containing protein 3 (432 aa).

2 consecutive EF-hand domains span residues 45–80 (AQLE…LGMN) and 81–116 (LNTY…KKLF). Residues aspartate 94, aspartate 96, aspartate 98, lysine 100, and aspartate 105 each coordinate Ca(2+). Tyrosine 273 bears the Phosphotyrosine mark. The interval 394–432 (SMNKSSPSNSGLSSPSDFSESDPETGRKRKRKSSRGFRQ) is disordered. Low complexity predominate over residues 395–411 (MNKSSPSNSGLSSPSDF). Basic residues predominate over residues 420–432 (RKRKRKSSRGFRQ).

This is EF-hand calcium-binding domain-containing protein 3 (Efcab3) from Mus musculus (Mouse).